A 133-amino-acid polypeptide reads, in one-letter code: Protein PROTON GRADIENT REGULATION 5, chloroplastic (133 aa).

The transit peptide at 1–60 (MAAASISAIGCNQTLIGTSFYGGWGSSISGEDYQTMLSKTVAPPQQARVSRKAIRAVPMM) directs the protein to the chloroplast.

This sequence belongs to the PGR5 family. Interacts with PGRL1A and PGRL1B. In terms of processing, disulfide bonds; Cys-11 and Cys-105 are probably involved in the formation of disulfide bridges with 'Cys-300' and 'Cys-303' of PGRL1A. 'Cys-272' and 'Cys-275' of PGRL1A may also be used to form the disulfide bridges, but in this case the cyclic electron flow is lost.

It localises to the plastid. Its subcellular location is the chloroplast thylakoid membrane. In terms of biological role, critical for growth under fluctuating-light conditions. Involved in the regulation of the cyclic electron flow (CEF) around Photosystem I. Essential for the reduction of PGRL1A by ferredoxin and for photoprotection. Contributes to maximize photosynthesis efficiency after a long dark adaptation via the regulation of non-photochemical quenching (NPQ); acts independently from DLDG1. Promotes the induction of steady-state proton motive force (pmf) and energy-dependent quenching (qE). The protein is Protein PROTON GRADIENT REGULATION 5, chloroplastic of Arabidopsis thaliana (Mouse-ear cress).